The chain runs to 912 residues: Protein translocase subunit SecA (912 aa).

Residues Gln87, 105–109 (GEGKT), and Asp508 contribute to the ATP site. Residues 869–912 (EQMQGGNAPVPVSQVTRDEPKVGRNDPCPCGSGKKYKHCHGQLS) are disordered. Residues Cys896, Cys898, Cys907, and His908 each contribute to the Zn(2+) site. The span at 902 to 912 (KKYKHCHGQLS) shows a compositional bias: basic residues.

The protein belongs to the SecA family. Monomer and homodimer. Part of the essential Sec protein translocation apparatus which comprises SecA, SecYEG and auxiliary proteins SecDF-YajC and YidC. Requires Zn(2+) as cofactor.

It is found in the cell inner membrane. Its subcellular location is the cytoplasm. The catalysed reaction is ATP + H2O + cellular proteinSide 1 = ADP + phosphate + cellular proteinSide 2.. In terms of biological role, part of the Sec protein translocase complex. Interacts with the SecYEG preprotein conducting channel. Has a central role in coupling the hydrolysis of ATP to the transfer of proteins into and across the cell membrane, serving both as a receptor for the preprotein-SecB complex and as an ATP-driven molecular motor driving the stepwise translocation of polypeptide chains across the membrane. The chain is Protein translocase subunit SecA from Xanthomonas axonopodis pv. citri (strain 306).